A 593-amino-acid chain; its full sequence is NADH-quinone oxidoreductase subunit C/D (593 aa).

Residues 1-184 (MTADNAIFIP…DPYSLTLAKQ (184 aa)) form an NADH dehydrogenase I subunit C region. Residues 208-593 (DYMFLNLGPN…IDFVMADVDR (386 aa)) form an NADH dehydrogenase I subunit D region.

It in the N-terminal section; belongs to the complex I 30 kDa subunit family. The protein in the C-terminal section; belongs to the complex I 49 kDa subunit family. In terms of assembly, NDH-1 is composed of 13 different subunits. Subunits NuoB, CD, E, F, and G constitute the peripheral sector of the complex.

The protein resides in the cell inner membrane. It catalyses the reaction a quinone + NADH + 5 H(+)(in) = a quinol + NAD(+) + 4 H(+)(out). Functionally, NDH-1 shuttles electrons from NADH, via FMN and iron-sulfur (Fe-S) centers, to quinones in the respiratory chain. The immediate electron acceptor for the enzyme in this species is believed to be ubiquinone. Couples the redox reaction to proton translocation (for every two electrons transferred, four hydrogen ions are translocated across the cytoplasmic membrane), and thus conserves the redox energy in a proton gradient. This Pseudomonas putida (strain GB-1) protein is NADH-quinone oxidoreductase subunit C/D.